Consider the following 1115-residue polypeptide: G-protein coupled receptor GRL101 (1115 aa).

Positions 1 to 24 (MATMSGTTIVCLIYLTTMLGNSQG) are cleaved as a signal peptide. Residues 25–767 (VNLKIESPSP…SCEDLMSNHV (743 aa)) are Extracellular-facing. LDL-receptor class A domains lie at 36–79 (TLCS…TCGC), 77–115 (CGCL…ECDI), 116–155 (YICP…ICER), 156–196 (RECV…ACDS), 195–232 (DSDK…NCKL), 231–269 (KLCD…VCAN), 272–318 (YGCP…YCSN), 320–363 (SECK…SCLA), 365–403 (PKCS…NCEN), 404–442 (HQCA…DCDP), 444–485 (PVCE…NCSQ), and 486–525 (HICL…NCRY). 16 disulfides stabilise this stretch: C38-C53, C46-C66, C60-C77, C79-C91, C86-C104, C98-C113, C118-C131, C138-C153, C158-C170, C165-C183, C177-C194, C202-C220, C214-C230, C233-C245, C240-C258, and C252-C267. N-linked (GlcNAc...) asparagine glycosylation occurs at N87. N166 carries N-linked (GlcNAc...) asparagine glycosylation. N269 carries an N-linked (GlcNAc...) asparagine glycan. Disulfide bonds link C274–C291, C282–C304, and C298–C316. N-linked (GlcNAc...) asparagine glycosylation occurs at N318. Disulfide bonds link C322–C339, C334–C352, C346–C361, C367–C379, C374–C392, C386–C401, C406–C418, C413–C431, C425–C440, C446–C458, C453–C474, C465–C483, C488–C500, C495–C513, and C507–C523. N-linked (GlcNAc...) asparagine glycosylation occurs at N482. N502 is a glycosylation site (N-linked (GlcNAc...) asparagine). Residues 518-562 (WDENNCRYWCPHGQAICQCEGVTMDCTGQKLKEMPVQQMEEDLSK) form the LRRNT domain. A glycan (N-linked (GlcNAc...) asparagine) is linked at N571. LRR repeat units lie at residues 584–605 (KVTY…SFQN), 608–629 (KLTH…SLLG), 632–653 (NLKQ…TFSS), 656–677 (HLTV…MFKG), 680–701 (QITV…AFNN), and 704–725 (NVRL…VFMG). N-linked (GlcNAc...) asparagine glycans are attached at residues N618 and N624. N685 carries N-linked (GlcNAc...) asparagine glycosylation. A helical membrane pass occupies residues 768–788 (LRVSIWVLGVIALVGNFVVIF). At 789-801 (WRVRDFRGGKVHS) the chain is on the cytoplasmic side. Residues 802-822 (FLITNLAIGDFLMGVYLLIIA) form a helical membrane-spanning segment. The Extracellular portion of the chain corresponds to 823 to 857 (TADTYYRGVYISHDENWKQSGLCQFAGFVSTFSSE). Residues 858 to 878 (LSVLTLSTITLDRLICILFPL) traverse the membrane as a helical segment. Residues 879-887 (RRTRLGLRQ) lie on the Cytoplasmic side of the membrane. The chain crosses the membrane as a helical span at residues 888–908 (AIIVMSCIWVLVFLLAVLPLL). Topologically, residues 909-941 (GFSYFENFYGRSGVCLALHVTPDRRPGWEYSVG) are extracellular. Residues 942 to 962 (VFILLNLLSFVLIASSYLWMF) traverse the membrane as a helical segment. Over 963-988 (SVAKKTRSAVRTAESKNDNAMARRMT) the chain is Cytoplasmic. A helical transmembrane segment spans residues 989–1009 (LIVMTDFCCWVPIIVLGFVSL). The Extracellular portion of the chain corresponds to 1010–1017 (AGARADDQ). Residues 1018 to 1038 (VYAWIAVFVLPLNSATNPVIY) traverse the membrane as a helical segment. The Cytoplasmic portion of the chain corresponds to 1039–1115 (TLSTAPFLGN…YYNTELHSDS (77 aa)).

It belongs to the G-protein coupled receptor 1 family. In terms of tissue distribution, predominantly expressed in a small number of neurons within the central nervous system and to a lesser extent in the heart.

The protein localises to the cell membrane. Might directly transduce signals carried by large extracellular lipoprotein complexes into neuronal events. This chain is G-protein coupled receptor GRL101, found in Lymnaea stagnalis (Great pond snail).